The sequence spans 252 residues: MRILLSNDDGILAKGLGVLERAAESLGELHVVAPDREQSATSHSLTLHHPLRPVRLGERRWQVDGTPTDCVMLACEALLEARPDFVLSGINHGPNMGEDVLYSGTVAAAMEGLALGIPAIALSFAGNVLRADALLDTQVGAIRSLLHHLTGLPAFPADTLLNVNLPAVPGDEIRGIRLTRLGRRVFSDSIARMKDPWGRDILWIGGGSVEWSGAPDSDFRAVHDGYISVTPLHLDLTHRDVLNTSTEWWQEP.

A divalent metal cation is bound by residues Asp8, Asp9, Ser39, and Asn91.

This sequence belongs to the SurE nucleotidase family. A divalent metal cation serves as cofactor.

The protein localises to the cytoplasm. It carries out the reaction a ribonucleoside 5'-phosphate + H2O = a ribonucleoside + phosphate. In terms of biological role, nucleotidase that shows phosphatase activity on nucleoside 5'-monophosphates. This is 5'-nucleotidase SurE from Gemmatimonas aurantiaca (strain DSM 14586 / JCM 11422 / NBRC 100505 / T-27).